The chain runs to 139 residues: D-ribose pyranase (139 aa).

His-20 functions as the Proton donor in the catalytic mechanism. Residues Asp-28, His-106, and 128 to 130 (YAN) each bind substrate.

Belongs to the RbsD / FucU family. RbsD subfamily. As to quaternary structure, homodecamer.

It localises to the cytoplasm. It catalyses the reaction beta-D-ribopyranose = beta-D-ribofuranose. It functions in the pathway carbohydrate metabolism; D-ribose degradation; D-ribose 5-phosphate from beta-D-ribopyranose: step 1/2. Catalyzes the interconversion of beta-pyran and beta-furan forms of D-ribose. In Salmonella typhi, this protein is D-ribose pyranase.